The following is a 409-amino-acid chain: NADH-quinone oxidoreductase subunit D (409 aa).

This sequence belongs to the complex I 49 kDa subunit family. As to quaternary structure, NDH-1 is composed of 14 different subunits. Subunits NuoB, C, D, E, F, and G constitute the peripheral sector of the complex.

The protein localises to the cell inner membrane. The catalysed reaction is a quinone + NADH + 5 H(+)(in) = a quinol + NAD(+) + 4 H(+)(out). In terms of biological role, NDH-1 shuttles electrons from NADH, via FMN and iron-sulfur (Fe-S) centers, to quinones in the respiratory chain. The immediate electron acceptor for the enzyme in this species is believed to be ubiquinone. Couples the redox reaction to proton translocation (for every two electrons transferred, four hydrogen ions are translocated across the cytoplasmic membrane), and thus conserves the redox energy in a proton gradient. In Helicobacter pylori (strain G27), this protein is NADH-quinone oxidoreductase subunit D.